The sequence spans 488 residues: Zinc metalloproteinase-disintegrin 8 (488 aa).

A signal peptide spans 1–20 (MIQVLLVTICLAVFPYQGSS). Positions 21–191 (IILESGNVND…KASQLNLPPE (171 aa)) are excised as a propeptide. The Peptidase M12B domain maps to 198–396 (TYIELVVVAD…STTRCLHNEP (199 aa)). Ca(2+) contacts are provided by Glu-201 and Asp-285. N-linked (GlcNAc...) asparagine glycosylation is present at Asn-296. 3 disulfides stabilise this stretch: Cys-309-Cys-391, Cys-349-Cys-373, and Cys-351-Cys-356. A Zn(2+)-binding site is contributed by His-334. Glu-335 is an active-site residue. Zn(2+)-binding residues include His-338 and His-344. Ca(2+)-binding residues include Cys-391, Asn-394, Asn-409, Glu-413, Glu-416, and Asp-419. A Disintegrin domain is found at 404–488 (PPFCGNYFKE…ADCPRNGLYG (85 aa)). 7 disulfide bridges follow: Cys-407–Cys-426, Cys-418–Cys-436, Cys-420–Cys-431, Cys-430–Cys-453, Cys-444–Cys-450, Cys-449–Cys-474, and Cys-462–Cys-481. Positions 466 to 468 (RGD) match the Cell attachment site motif.

It belongs to the venom metalloproteinase (M12B) family. P-II subfamily. The cofactor is Zn(2+). Expressed by the venom gland.

It is found in the secreted. Functionally, inhibits ADP-induced platelet aggregation (probably by binding integrin alpha-IIb/beta-3 (ITGA2B/ITGB3)) and degrades fibrinogen. The sequence is that of Zinc metalloproteinase-disintegrin 8 from Crotalus adamanteus (Eastern diamondback rattlesnake).